Here is a 579-residue protein sequence, read N- to C-terminus: Proteasome-associated ATPase (579 aa).

The disordered stretch occupies residues 1-21 (MPRDETPEREHAEQQSRQALE). Positions 8–86 (EREHAEQQSR…REEVEKLTQP (79 aa)) form a coiled coil. 268–273 (GCGKTL) lines the ATP pocket. Positions 578 to 579 (YL) are docks into pockets in the proteasome alpha-ring.

Belongs to the AAA ATPase family. Homohexamer. Assembles into a hexameric ring structure that caps the 20S proteasome core. Strongly interacts with the prokaryotic ubiquitin-like protein Pup through a hydrophobic interface; the interacting region of ARC lies in its N-terminal coiled-coil domain. There is one Pup binding site per ARC hexamer ring. Upon ATP-binding, the C-terminus of ARC interacts with the alpha-rings of the proteasome core, possibly by binding to the intersubunit pockets.

It functions in the pathway protein degradation; proteasomal Pup-dependent pathway. Its function is as follows. ATPase which is responsible for recognizing, binding, unfolding and translocation of pupylated proteins into the bacterial 20S proteasome core particle. May be essential for opening the gate of the 20S proteasome via an interaction with its C-terminus, thereby allowing substrate entry and access to the site of proteolysis. Thus, the C-termini of the proteasomal ATPase may function like a 'key in a lock' to induce gate opening and therefore regulate proteolysis. The sequence is that of Proteasome-associated ATPase from Acidimicrobium ferrooxidans (strain DSM 10331 / JCM 15462 / NBRC 103882 / ICP).